The primary structure comprises 156 residues: Deoxyuridine 5'-triphosphate nucleotidohydrolase (156 aa).

Residues 76–78 (RSG), Asn-89, 93–95 (TVD), and Lys-103 contribute to the substrate site.

The protein belongs to the dUTPase family. Mg(2+) is required as a cofactor.

It catalyses the reaction dUTP + H2O = dUMP + diphosphate + H(+). It participates in pyrimidine metabolism; dUMP biosynthesis; dUMP from dCTP (dUTP route): step 2/2. This enzyme is involved in nucleotide metabolism: it produces dUMP, the immediate precursor of thymidine nucleotides and it decreases the intracellular concentration of dUTP so that uracil cannot be incorporated into DNA. In Rhizobium rhizogenes (strain K84 / ATCC BAA-868) (Agrobacterium radiobacter), this protein is Deoxyuridine 5'-triphosphate nucleotidohydrolase.